We begin with the raw amino-acid sequence, 352 residues long: Photosystem II D2 protein (352 aa).

Thr-2 carries the N-acetylthreonine modification. Thr-2 carries the phosphothreonine modification. Residues 40–60 traverse the membrane as a helical segment; sequence CAYFALGGWLTGTTFVTSWYT. His-117 contacts chlorophyll a. Residues 124-140 form a helical membrane-spanning segment; sequence GFMLRQFEIARSVNLRP. Pheophytin a is bound by residues Gln-129 and Asn-142. The helical transmembrane segment at 152 to 165 threads the bilayer; it reads VFVSVFLIYPLGQS. Position 197 (His-197) interacts with chlorophyll a. The chain crosses the membrane as a helical span at residues 207–227; it reads AALLCAIHGATVENTLFEDGD. A plastoquinone contacts are provided by His-214 and Phe-261. His-214 serves as a coordination point for Fe cation. His-268 contributes to the Fe cation binding site. A helical transmembrane segment spans residues 278–294; it reads GLWMSAIGVVGLALNLR.

The protein belongs to the reaction center PufL/M/PsbA/D family. PSII is composed of 1 copy each of membrane proteins PsbA, PsbB, PsbC, PsbD, PsbE, PsbF, PsbH, PsbI, PsbJ, PsbK, PsbL, PsbM, PsbT, PsbX, PsbY, PsbZ, Psb30/Ycf12, at least 3 peripheral proteins of the oxygen-evolving complex and a large number of cofactors. It forms dimeric complexes. The cofactor is The D1/D2 heterodimer binds P680, chlorophylls that are the primary electron donor of PSII, and subsequent electron acceptors. It shares a non-heme iron and each subunit binds pheophytin, quinone, additional chlorophylls, carotenoids and lipids. There is also a Cl(-1) ion associated with D1 and D2, which is required for oxygen evolution. The PSII complex binds additional chlorophylls, carotenoids and specific lipids.. In terms of processing, phosphorylated in vitro.

Its subcellular location is the plastid. The protein localises to the chloroplast thylakoid membrane. It carries out the reaction 2 a plastoquinone + 4 hnu + 2 H2O = 2 a plastoquinol + O2. Functionally, photosystem II (PSII) is a light-driven water:plastoquinone oxidoreductase that uses light energy to abstract electrons from H(2)O, generating O(2) and a proton gradient subsequently used for ATP formation. It consists of a core antenna complex that captures photons, and an electron transfer chain that converts photonic excitation into a charge separation. The D1/D2 (PsbA/PsbD) reaction center heterodimer binds P680, the primary electron donor of PSII as well as several subsequent electron acceptors. D2 is needed for assembly of a stable PSII complex. The sequence is that of Photosystem II D2 protein from Chlamydomonas reinhardtii (Chlamydomonas smithii).